Reading from the N-terminus, the 429-residue chain is MAAIVIVGAQWGDEGKGKATDILGGQVDYVVKPNGGNNAGHTVVVGGEKYELKLLPAGVLSENATPILGNGVVINLEALFEEMDGLIARGCDASRLRISSNAHLVAPYHQILDRVQERFLGKRAIGTTGRGIGPTYADKVSRVGIRVQDVFDESILRQKIESALNVKNQTLVKMYNRKAIVAEEMVQYFLGYVERLRPMVIEAELELNRGLDAGKHVLMEGGQATMLDVDHGTYPFVTSSNPTAGGACVGSGIGPTRITSSLGIIKAYTTRVGAGPFPTELFDKWGEFLQTTGGEVGVNTGRKRRCGWYDSVVARYASRVNGFTDLFLTKLDVLTGIGEIPICVAYDVDGVRHDEMPMTQSDFHHATPIYETMPAWDEDITGCKTFDDLPEKAQAYVRRLEELSGCRISYIGVGPGRDQTIVCHDVMEA.

GTP contacts are provided by residues 12-18 and 40-42; these read GDEGKGK and GHT. Aspartate 13 serves as the catalytic Proton acceptor. Mg(2+)-binding residues include aspartate 13 and glycine 40. IMP-binding positions include 13-16, 38-41, threonine 128, arginine 142, glutamine 223, threonine 238, and arginine 302; these read DEGK and NAGH. The active-site Proton donor is histidine 41. 298–304 contacts substrate; sequence VNTGRKR. Residues arginine 304, 330 to 332, and 412 to 414 contribute to the GTP site; these read KLD and GVG.

Belongs to the adenylosuccinate synthetase family. As to quaternary structure, homodimer. Requires Mg(2+) as cofactor.

The protein resides in the cytoplasm. It catalyses the reaction IMP + L-aspartate + GTP = N(6)-(1,2-dicarboxyethyl)-AMP + GDP + phosphate + 2 H(+). It participates in purine metabolism; AMP biosynthesis via de novo pathway; AMP from IMP: step 1/2. Its function is as follows. Plays an important role in the de novo pathway of purine nucleotide biosynthesis. Catalyzes the first committed step in the biosynthesis of AMP from IMP. In Corynebacterium diphtheriae (strain ATCC 700971 / NCTC 13129 / Biotype gravis), this protein is Adenylosuccinate synthetase.